The primary structure comprises 421 residues: Phosphoglycerate kinase (421 aa).

(2R)-3-phosphoglycerate is bound by residues Val23, Asp24, Phe25, Asn26, Gln41, Arg42, Ser65, His66, Gly68, Arg69, Leu124, Arg125, His172, and Arg173. Gly216 provides a ligand contact to ADP. Gly216 serves as a coordination point for CDP. Lys218 contributes to the AMP binding site. Residue Asp221 participates in CDP binding. Asp221 serves as a coordination point for Mg(2+). Lys222 is an AMP binding site. Residue Lys222 coordinates ATP. Gly240 is an ADP binding site. Position 240 (Gly240) interacts with CDP. AMP-binding residues include Gly241 and Gly315. ATP is bound by residues Gly241 and Gly315. Residues Gly340 and Phe345 each contribute to the CDP site. Phe345 is an ADP binding site. AMP is bound at residue Glu346. Residues Glu346, Asp377, and Thr378 each contribute to the ATP site. Position 377 (Asp377) interacts with Mg(2+).

This sequence belongs to the phosphoglycerate kinase family. Monomer. It depends on Mg(2+) as a cofactor.

It localises to the cytoplasm. It is found in the mitochondrion. It carries out the reaction (2R)-3-phosphoglycerate + ATP = (2R)-3-phospho-glyceroyl phosphate + ADP. It participates in carbohydrate degradation; glycolysis; pyruvate from D-glyceraldehyde 3-phosphate: step 2/5. In terms of biological role, catalyzes one of the two ATP producing reactions in the glycolytic pathway via the reversible conversion of 1,3-diphosphoglycerate to 3-phosphoglycerate. Both L- and D- forms of purine and pyrimidine nucleotides can be used as substrates, but the activity is much lower on pyrimidines. Negatively regulates the biosynthesis of acetyl-CoA from pyruvate in the mitochondrion. The sequence is that of Phosphoglycerate kinase (pgkA) from Emericella nidulans (strain FGSC A4 / ATCC 38163 / CBS 112.46 / NRRL 194 / M139) (Aspergillus nidulans).